The primary structure comprises 883 residues: MEKLSANEIRQLWIDFFREKNHFFIESKPLVPQNDDSLLWINSGVATLKDYFTGKKIPPSKRLVNSQKALRTNDIENVGLTSRHHTLFEMLGNFSIGDYFKTEAIDYAYEFLTKKLKLDPKNLFITYYDGDDITFEKWKSLGFSNEKLIKGSKKTNFWDLGQGPCGPCSEIYFDRGPKFDSRGSELIKNEIENDRFIEIWNIVFSEFNNDGQQNYAPLKSKNIDTGAGFERIVSILQDGPTNYDTDLFLPIIAEIEKNTVFRYKIENYFLKKPRQTQINKSFRIIADHIRAITLAINDGVQPSNLHRGYIIRRLIRRAYWNGKKLGISHPFLYKLVEIVGKTLDYRFDIPTISKIILNEEENFAKTLEIGYNLLESQLKINKNQIKPVTVFKLFETYGFPVELTKEILAEKNIDFDLSQLVEFQEKHSQISRAKKTTGMQKVINSLTQIKAKISDFIGYHTHHIETKISFLANKDEEVAETNGENLSYVIFEKTPFYATAGGQKHDQGWIIQNNSTIEILDVFKDKFLNNIHVFKGKIVKNQPVFLKLDTKNRLNLERNHSGTHLLFASLRQEFGSEIKQLGSDNNEDRLTFDFPLNRKPSDQEIKSVENRINSYINQKIKRKYLVTNLEEAQKLNAIMTLEESEYMDPNSLRLVIFDKITTDLCGGTHIENTELLEKFTILSCQSKGSGIYRIRAVTSWNKYFEFLKGKIQEILSKISALKNKIKKIEPNFGLNLPNLVDLEQQFDYLKKIEDDLRIYYKKLLKSQLRIAKSELDANKIIEIGKFSFYLDFNLPLHNLKQIAATWREQNPRISFILGANLVNNEFLIIVSSAILASNQILEKILEIFTGSGGGNYKIAQGKIQKKPEKEVFIKLLWENITEF.

Residues His-560, His-564, Cys-665, and His-669 each contribute to the Zn(2+) site.

The protein belongs to the class-II aminoacyl-tRNA synthetase family. Zn(2+) serves as cofactor.

It is found in the cytoplasm. It catalyses the reaction tRNA(Ala) + L-alanine + ATP = L-alanyl-tRNA(Ala) + AMP + diphosphate. Its function is as follows. Catalyzes the attachment of alanine to tRNA(Ala) in a two-step reaction: alanine is first activated by ATP to form Ala-AMP and then transferred to the acceptor end of tRNA(Ala). Also edits incorrectly charged Ser-tRNA(Ala) and Gly-tRNA(Ala) via its editing domain. The polypeptide is Alanine--tRNA ligase (Mesomycoplasma hyopneumoniae (strain 232) (Mycoplasma hyopneumoniae)).